Reading from the N-terminus, the 188-residue chain is GTPase KRas (188 aa).

Methionine 1 bears the N-acetylmethionine mark. Residue threonine 2 is modified to N-acetylthreonine; in GTPase KRas, N-terminally processed. Residues 10–18 (GAGGVGKSA), 29–35 (VDEYDPT), and 59–60 (AG) each bind GTP. An Effector region motif is present at residues 32–40 (YDPTIEDSY). Position 104 is an N6-acetyllysine (lysine 104). 116–119 (NKCD) serves as a coordination point for GTP. Residues 166-185 (HKEKMSKDGKKKKKKSKTKC) are hypervariable region. Residues 167 to 188 (KEKMSKDGKKKKKKSKTKCIIM) form a disordered region. Cysteine methyl ester is present on cysteine 185. Cysteine 185 carries the S-farnesyl cysteine lipid modification. The propeptide at 186-188 (IIM) is removed in mature form.

Belongs to the small GTPase superfamily. Ras family. As to quaternary structure, interacts with PHLPP. Interacts (active GTP-bound form preferentially) with RGS14. Interacts (when farnesylated) with PDE6D; this promotes dissociation from the cell membrane. Interacts with SOS1. Interacts (when farnesylated) with GPR31. Interacts with RAP1GDS1. Interacts (active GTP-bound form) with both SHOC2 and PP1c (all isoforms) to form a tertiary complex; SHOC2 and PP1c preferably bind M-Ras/MRAS, but they also bind K-Ras/KRAS, N-Ras/NRAS and H-Ras/HRAS. Interacts (GTP-bound form) with MAPKAP1/SIN1; inhibiting K-Ras/KRAS activity. In terms of processing, acetylation at Lys-104 prevents interaction with guanine nucleotide exchange factors (GEFs).

The protein localises to the cell membrane. It localises to the cytoplasm. The protein resides in the cytosol. The enzyme catalyses GTP + H2O = GDP + phosphate + H(+). Alternates between an inactive form bound to GDP and an active form bound to GTP. Activated by a guanine nucleotide-exchange factor (GEF) and inactivated by a GTPase-activating protein (GAP). Interaction with SOS1 promotes exchange of bound GDP to GTP. Its function is as follows. Ras proteins bind GDP/GTP and possess intrinsic GTPase activity. Plays an important role in the regulation of cell proliferation. Plays a role in promoting oncogenic events by inducing transcriptional silencing of tumor suppressor genes (TSGs) in colorectal cancer (CRC) cells in a ZNF304-dependent manner. In Monodelphis domestica (Gray short-tailed opossum), this protein is GTPase KRas (KRAS).